The sequence spans 144 residues: Large ribosomal subunit protein uL16 (144 aa).

Basic residues predominate over residues 1-16 (MLTPKRVKHRKQHRGK). The tract at residues 1–22 (MLTPKRVKHRKQHRGKMAGNAK) is disordered.

The protein belongs to the universal ribosomal protein uL16 family. In terms of assembly, part of the 50S ribosomal subunit.

Its function is as follows. Binds 23S rRNA and is also seen to make contacts with the A and possibly P site tRNAs. This chain is Large ribosomal subunit protein uL16, found in Brevibacillus brevis (strain 47 / JCM 6285 / NBRC 100599).